The following is a 102-amino-acid chain: Putative pterin-4-alpha-carbinolamine dehydratase (102 aa).

The protein belongs to the pterin-4-alpha-carbinolamine dehydratase family.

It catalyses the reaction (4aS,6R)-4a-hydroxy-L-erythro-5,6,7,8-tetrahydrobiopterin = (6R)-L-erythro-6,7-dihydrobiopterin + H2O. In Burkholderia cenocepacia (strain ATCC BAA-245 / DSM 16553 / LMG 16656 / NCTC 13227 / J2315 / CF5610) (Burkholderia cepacia (strain J2315)), this protein is Putative pterin-4-alpha-carbinolamine dehydratase.